Reading from the N-terminus, the 458-residue chain is Vacuolar basic amino acid transporter 3 (458 aa).

The Cytoplasmic segment spans residues 1–9 (MNMLIVGRV). Residues 10 to 30 (VASVGGSGLQTLCFVIGCTMV) form a helical membrane-spanning segment. Residues 31–36 (GERSRP) are Vacuolar-facing. The helical transmembrane segment at 37–57 (LVISILSCAFAVAAIVGPIIG) threads the bilayer. Topologically, residues 58 to 67 (GAFTTHVTWR) are cytoplasmic. Residues 68 to 88 (WCFYINLPIGGLAIIMFLLTY) form a helical membrane-spanning segment. Residues 89 to 132 (KAENKGILQQIKDAIGTISSFTFSKFRHQVNFKRLMNGIIFKFD) are Vacuolar-facing. A helical transmembrane segment spans residues 133–153 (FFGFALCSAGLVLFLLGLTFG). At 154–163 (GNKYSWNSGQ) the chain is on the cytoplasmic side. Residues 164-184 (VIAYLVLGVLLFIFSLVYDFF) form a helical membrane-spanning segment. The Vacuolar segment spans residues 185-205 (LFDKFNPEPDNISYRPLLLRR). Asn-195 carries an N-linked (GlcNAc...) asparagine glycan. The chain crosses the membrane as a helical span at residues 206-226 (LVAKPAIIIINMVTFLLCTGY). Residues 227 to 248 (NGQMIYSVQFFQLIFASSAWKA) are Cytoplasmic-facing. The chain crosses the membrane as a helical span at residues 249–269 (GLHLIPIVITNVIAAIASGVI). Residues 270–277 (TKKLGLVK) are Vacuolar-facing. Residues 278–298 (PLLIFGGVLGVIGAGLMTLMT) form a helical membrane-spanning segment. Topologically, residues 299–306 (NTSTKSTQ) are cytoplasmic. A helical transmembrane segment spans residues 307–327 (IGVLLLPGFSLGFALQASLMS). At 328–415 (AQLQITKDRP…STIGNILSDS (88 aa)) the chain is on the vacuolar side. The chain crosses the membrane as a helical span at residues 416-436 (IKNVFWMDLGFYALGFLFCSF). The Cytoplasmic portion of the chain corresponds to 437-458 (SSNKKLIIPKKDETPEDNLEDK).

Belongs to the major facilitator superfamily.

It is found in the vacuole membrane. Transporter required for vacuolar uptake of histidine and lysine. The polypeptide is Vacuolar basic amino acid transporter 3 (VBA3) (Saccharomyces cerevisiae (strain ATCC 204508 / S288c) (Baker's yeast)).